The sequence spans 662 residues: Protein translocase subunit SecA 2 (662 aa).

ATP contacts are provided by residues Gln-110, 128 to 132 (GEGKT), and Asp-538.

It belongs to the SecA family. Monomer and homodimer. Part of the essential Sec protein translocation apparatus which comprises SecA, SecYEG and auxiliary proteins SecDF. Other proteins may also be involved.

Its subcellular location is the cell inner membrane. The protein resides in the cytoplasm. The enzyme catalyses ATP + H2O + cellular proteinSide 1 = ADP + phosphate + cellular proteinSide 2.. Its function is as follows. Part of the Sec protein translocase complex. Interacts with the SecYEG preprotein conducting channel. Has a central role in coupling the hydrolysis of ATP to the transfer of proteins into and across the cell membrane, serving as an ATP-driven molecular motor driving the stepwise translocation of polypeptide chains across the membrane. The protein is Protein translocase subunit SecA 2 of Chlorobium chlorochromatii (strain CaD3).